We begin with the raw amino-acid sequence, 443 residues long: Methyl-coenzyme M reductase I subunit beta (443 aa).

Tyr367 is a binding site for coenzyme M. Gly369 is a binding site for coenzyme B.

This sequence belongs to the methyl-coenzyme M reductase beta subunit family. MCR is a hexamer of two alpha, two beta, and two gamma chains, forming a dimer of heterotrimers. Coenzyme F430 is required as a cofactor.

The protein localises to the cytoplasm. It carries out the reaction coenzyme B + methyl-coenzyme M = methane + coenzyme M-coenzyme B heterodisulfide. It functions in the pathway one-carbon metabolism; methyl-coenzyme M reduction; methane from methyl-coenzyme M: step 1/1. Its function is as follows. Component of the methyl-coenzyme M reductase (MCR) I that catalyzes the reductive cleavage of methyl-coenzyme M (CoM-S-CH3 or 2-(methylthio)ethanesulfonate) using coenzyme B (CoB or 7-mercaptoheptanoylthreonine phosphate) as reductant which results in the production of methane and the mixed heterodisulfide of CoB and CoM (CoM-S-S-CoB). This is the final step in methanogenesis. The chain is Methyl-coenzyme M reductase I subunit beta (mcrB) from Methanothermobacter thermautotrophicus (strain ATCC 29096 / DSM 1053 / JCM 10044 / NBRC 100330 / Delta H) (Methanobacterium thermoautotrophicum).